The following is a 350-amino-acid chain: Small ribosomal subunit biogenesis GTPase RsgA (350 aa).

The tract at residues methionine 1–lysine 30 is disordered. Polar residues predominate over residues threonine 7–lysine 20. A compositionally biased stretch (basic residues) spans threonine 21 to lysine 30. The CP-type G domain occupies histidine 106 to phenylalanine 274. GTP-binding positions include asparagine 162 to aspartate 165 and glycine 216 to serine 224. The Zn(2+) site is built by cysteine 298, cysteine 303, histidine 305, and cysteine 311.

Belongs to the TRAFAC class YlqF/YawG GTPase family. RsgA subfamily. As to quaternary structure, monomer. Associates with 30S ribosomal subunit, binds 16S rRNA. The cofactor is Zn(2+).

It localises to the cytoplasm. Functionally, one of several proteins that assist in the late maturation steps of the functional core of the 30S ribosomal subunit. Helps release RbfA from mature subunits. May play a role in the assembly of ribosomal proteins into the subunit. Circularly permuted GTPase that catalyzes slow GTP hydrolysis, GTPase activity is stimulated by the 30S ribosomal subunit. The sequence is that of Small ribosomal subunit biogenesis GTPase RsgA from Histophilus somni (strain 129Pt) (Haemophilus somnus).